We begin with the raw amino-acid sequence, 251 residues long: Ubiquinone/menaquinone biosynthesis C-methyltransferase UbiE (251 aa).

Residues threonine 74, aspartate 95, 123-124 (NA), and serine 140 each bind S-adenosyl-L-methionine.

Belongs to the class I-like SAM-binding methyltransferase superfamily. MenG/UbiE family.

It carries out the reaction a 2-demethylmenaquinol + S-adenosyl-L-methionine = a menaquinol + S-adenosyl-L-homocysteine + H(+). It catalyses the reaction a 2-methoxy-6-(all-trans-polyprenyl)benzene-1,4-diol + S-adenosyl-L-methionine = a 5-methoxy-2-methyl-3-(all-trans-polyprenyl)benzene-1,4-diol + S-adenosyl-L-homocysteine + H(+). It participates in quinol/quinone metabolism; menaquinone biosynthesis; menaquinol from 1,4-dihydroxy-2-naphthoate: step 2/2. Its pathway is cofactor biosynthesis; ubiquinone biosynthesis. Functionally, methyltransferase required for the conversion of demethylmenaquinol (DMKH2) to menaquinol (MKH2) and the conversion of 2-polyprenyl-6-methoxy-1,4-benzoquinol (DDMQH2) to 2-polyprenyl-3-methyl-6-methoxy-1,4-benzoquinol (DMQH2). This is Ubiquinone/menaquinone biosynthesis C-methyltransferase UbiE from Yersinia pestis bv. Antiqua (strain Angola).